The sequence spans 204 residues: N-(5'-phosphoribosyl)anthranilate isomerase (204 aa).

Belongs to the TrpF family.

The catalysed reaction is N-(5-phospho-beta-D-ribosyl)anthranilate = 1-(2-carboxyphenylamino)-1-deoxy-D-ribulose 5-phosphate. It functions in the pathway amino-acid biosynthesis; L-tryptophan biosynthesis; L-tryptophan from chorismate: step 3/5. The chain is N-(5'-phosphoribosyl)anthranilate isomerase from Bacillus cereus (strain AH187).